A 360-amino-acid chain; its full sequence is Magnesium-protoporphyrin IX monomethyl ester [oxidative] cyclase (360 aa).

A disordered region spans residues 1-21; that stretch reads MPPTAVTEATAVPGSNVTTKD.

Belongs to the AcsF family. Requires Fe cation as cofactor.

It carries out the reaction Mg-protoporphyrin IX 13-monomethyl ester + 3 NADPH + 3 O2 + 2 H(+) = 3,8-divinyl protochlorophyllide a + 3 NADP(+) + 5 H2O. It functions in the pathway porphyrin-containing compound metabolism; chlorophyll biosynthesis (light-independent). Functionally, catalyzes the formation of the isocyclic ring in chlorophyll biosynthesis. Mediates the cyclase reaction, which results in the formation of divinylprotochlorophyllide (Pchlide) characteristic of all chlorophylls from magnesium-protoporphyrin IX 13-monomethyl ester (MgPMME). The chain is Magnesium-protoporphyrin IX monomethyl ester [oxidative] cyclase from Synechococcus sp. (strain CC9311).